We begin with the raw amino-acid sequence, 450 residues long: Crh-like protein 4 (450 aa).

The signal sequence occupies residues 1-21; it reads MRLSLVGVAIGLLSSSAIVTA. Cys-27 and Cys-34 form a disulfide bridge. The region spanning 46–228 is the GH16 domain; it reads YDFTKGSSPD…WAGGETDYSA (183 aa). Glu-119 (nucleophile) is an active-site residue. The Proton donor role is filled by Glu-123. The chitin site is built by Glu-123, Lys-201, Trp-205, and Thr-216. An N-linked (GlcNAc...) asparagine glycan is attached at Asn-383.

It belongs to the glycosyl hydrolase 16 family. CRH1 subfamily. The GPI-like anchor contains a phosphoceramide lipid group. The anchor position has not been determined.

The protein resides in the cell membrane. The protein localises to the secreted. It localises to the cell wall. The catalysed reaction is Random endo-hydrolysis of N-acetyl-beta-D-glucosaminide (1-&gt;4)-beta-linkages in chitin and chitodextrins.. Functionally, dual chitinase/transglycosylase that plays a role in cell wall architecture. Chitinase and transglycosylase activities are coupled. Required for the polysaccharide cross-linking at the septa and the cell wall. More specifically, transfers chitin to 1,6-beta-glucan in the cell wall. This is Crh-like protein 4 from Aspergillus fumigatus (strain ATCC MYA-4609 / CBS 101355 / FGSC A1100 / Af293) (Neosartorya fumigata).